Consider the following 342-residue polypeptide: UV excision repair protein RAD23 homolog (342 aa).

In terms of domain architecture, Ubiquitin-like spans 1–76 (MKVTIKNINK…IVMMIKKPRE (76 aa)). Residues 77-151 (APATTPAPST…TPGSTSTTSP (75 aa)) are compositionally biased toward low complexity. The disordered stretch occupies residues 77-157 (APATTPAPST…TTSPQQSSDF (81 aa)). UBA domains follow at residues 161–201 (TELE…LVSG) and 297–338 (QEES…LFET).

It belongs to the RAD23 family.

It localises to the nucleus. The protein resides in the cytoplasm. In terms of biological role, may play a role both in proteasomal degradation of misfolded proteins and DNA repair. The sequence is that of UV excision repair protein RAD23 homolog (rcbA) from Dictyostelium discoideum (Social amoeba).